Reading from the N-terminus, the 247-residue chain is 3-deoxy-manno-octulosonate cytidylyltransferase (247 aa).

Belongs to the KdsB family.

It localises to the cytoplasm. It catalyses the reaction 3-deoxy-alpha-D-manno-oct-2-ulosonate + CTP = CMP-3-deoxy-beta-D-manno-octulosonate + diphosphate. It participates in nucleotide-sugar biosynthesis; CMP-3-deoxy-D-manno-octulosonate biosynthesis; CMP-3-deoxy-D-manno-octulosonate from 3-deoxy-D-manno-octulosonate and CTP: step 1/1. Its pathway is bacterial outer membrane biogenesis; lipopolysaccharide biosynthesis. In terms of biological role, activates KDO (a required 8-carbon sugar) for incorporation into bacterial lipopolysaccharide in Gram-negative bacteria. This chain is 3-deoxy-manno-octulosonate cytidylyltransferase, found in Rhodopseudomonas palustris (strain BisA53).